Consider the following 308-residue polypeptide: Aspartate carbamoyltransferase catalytic subunit (308 aa).

Carbamoyl phosphate contacts are provided by R55 and T56. K85 is a binding site for L-aspartate. Carbamoyl phosphate is bound by residues R106, H135, and Q138. 2 residues coordinate L-aspartate: R168 and R229. Residues L267 and P268 each contribute to the carbamoyl phosphate site.

Belongs to the aspartate/ornithine carbamoyltransferase superfamily. ATCase family. In terms of assembly, heterododecamer (2C3:3R2) of six catalytic PyrB chains organized as two trimers (C3), and six regulatory PyrI chains organized as three dimers (R2).

It catalyses the reaction carbamoyl phosphate + L-aspartate = N-carbamoyl-L-aspartate + phosphate + H(+). Its pathway is pyrimidine metabolism; UMP biosynthesis via de novo pathway; (S)-dihydroorotate from bicarbonate: step 2/3. Functionally, catalyzes the condensation of carbamoyl phosphate and aspartate to form carbamoyl aspartate and inorganic phosphate, the committed step in the de novo pyrimidine nucleotide biosynthesis pathway. In Laribacter hongkongensis (strain HLHK9), this protein is Aspartate carbamoyltransferase catalytic subunit.